Consider the following 456-residue polypeptide: Smoothelin-like protein 2 (456 aa).

A coiled-coil region spans residues 24 to 88 (LEGAVRALHE…RQVEALGLAT (65 aa)). Residue Thr96 is modified to Phosphothreonine. Phosphoserine is present on residues Ser98, Ser126, and Ser131. Over residues 120-129 (HATFSLSGRS) the composition is skewed to polar residues. Disordered regions lie at residues 120 to 140 (HATF…ASDL), 154 to 190 (GHQL…RMPH), and 220 to 310 (VGGF…GAQA). Basic and acidic residues predominate over residues 131–140 (SVEHDEASDL). Residues 163–174 (NGSSEVQTSSAQ) show a composition bias toward polar residues. Low complexity predominate over residues 242–251 (SSSFTRSLSG). Phosphoserine is present on residues Ser250, Ser252, and Ser265. Residues 268–279 (LVTPPQSPPSSQ) show a composition bias toward pro residues. A Phosphothreonine modification is found at Thr270. Ser274 carries the post-translational modification Phosphoserine. Over residues 298–308 (RSQTLPRTSGA) the composition is skewed to polar residues. A Phosphoserine modification is found at Ser339. The 108-residue stretch at 346 to 453 (SSIKQILLEW…YVQSLYNHLR (108 aa)) folds into the Calponin-homology (CH) domain.

This sequence belongs to the smoothelin family.

The polypeptide is Smoothelin-like protein 2 (Smtnl2) (Mus musculus (Mouse)).